The sequence spans 158 residues: Biotin carboxyl carrier protein of acetyl-CoA carboxylase (158 aa).

Residues 81–157 form the Biotinyl-binding domain; sequence YATIVSPMVG…DCGQALMKVE (77 aa). K123 carries the N6-biotinyllysine modification.

Its subcellular location is the plastid. The protein localises to the chloroplast. It functions in the pathway lipid metabolism; fatty acid biosynthesis. Its function is as follows. This protein is a component of the acetyl coenzyme A carboxylase complex; first, biotin carboxylase catalyzes the carboxylation of the carrier protein and then the transcarboxylase transfers the carboxyl group to form malonyl-CoA. This chain is Biotin carboxyl carrier protein of acetyl-CoA carboxylase (accB), found in Pyropia yezoensis (Susabi-nori).